The primary structure comprises 946 residues: Protein dct-6 (946 aa).

Residues 326-363 (YMDMNDQIEQMIALLVDQLEELEKLEQLCDEVQKTGNQ) are a coiled coil.

May have a role in tumor suppression. The protein is Protein dct-6 of Caenorhabditis briggsae.